Consider the following 87-residue polypeptide: MAHKKAGGSSRNGRDSESKRLGVKRYGGQFVLAGNIIVRQRGTEYHPGENVGIGKDHTLFALKDGTVQFTIKGAQRRRTVVIVPEAA.

A disordered region spans residues 1-21 (MAHKKAGGSSRNGRDSESKRL).

It belongs to the bacterial ribosomal protein bL27 family.

The protein is Large ribosomal subunit protein bL27 of Aromatoleum aromaticum (strain DSM 19018 / LMG 30748 / EbN1) (Azoarcus sp. (strain EbN1)).